Here is a 247-residue protein sequence, read N- to C-terminus: Chymase (247 aa).

The signal sequence occupies residues 1–19 (MHLLTLHLLLLLLGSSTKA). Residues 20-21 (GE) constitute a propeptide, activation peptide. Positions 22–245 (IIGGTECIPH…YRPWINKILR (224 aa)) constitute a Peptidase S1 domain. Cys51 and Cys67 are oxidised to a cystine. The Charge relay system role is filled by His66. An N-linked (GlcNAc...) asparagine glycan is attached at Asn80. The active-site Charge relay system is Asp110. Intrachain disulfides connect Cys144–Cys209 and Cys175–Cys188. The active-site Charge relay system is the Ser203.

It belongs to the peptidase S1 family. Granzyme subfamily. In terms of tissue distribution, mast cells.

The protein resides in the secreted. It is found in the cytoplasmic granule. It carries out the reaction Preferential cleavage: Phe-|-Xaa &gt; Tyr-|-Xaa &gt; Trp-|-Xaa &gt; Leu-|-Xaa.. Major secreted protease of mast cells with suspected roles in vasoactive peptide generation, extracellular matrix degradation, and regulation of gland secretion. The polypeptide is Chymase (Cma1) (Mus musculus (Mouse)).